Consider the following 513-residue polypeptide: Na(+)/H(+) antiporter NhaB (513 aa).

Transmembrane regions (helical) follow at residues 23 to 43 (LALI…PFVA), 52 to 72 (IFTL…LLAI), 97 to 117 (LLLM…LFIF), 120 to 140 (LLLS…AAAF), 144 to 164 (FLDA…FYGI), 202 to 222 (LMMH…VGEP), 238 to 258 (FFLR…LTCL), 303 to 323 (AIIG…VGLI), 348 to 368 (TESL…AVII), 391 to 411 (LFYI…VGTI), 447 to 467 (ATPN…APLI), and 475 to 495 (VWMA…CVEF).

The protein belongs to the NhaB Na(+)/H(+) (TC 2.A.34) antiporter family.

It is found in the cell inner membrane. The catalysed reaction is 2 Na(+)(in) + 3 H(+)(out) = 2 Na(+)(out) + 3 H(+)(in). Its function is as follows. Na(+)/H(+) antiporter that extrudes sodium in exchange for external protons. This chain is Na(+)/H(+) antiporter NhaB, found in Escherichia coli O6:H1 (strain CFT073 / ATCC 700928 / UPEC).